Consider the following 185-residue polypeptide: Crossover junction endodeoxyribonuclease RuvC (185 aa).

Active-site residues include D16, E75, and D147. Mg(2+)-binding residues include D16, E75, and D147.

The protein belongs to the RuvC family. Homodimer which binds Holliday junction (HJ) DNA. The HJ becomes 2-fold symmetrical on binding to RuvC with unstacked arms; it has a different conformation from HJ DNA in complex with RuvA. In the full resolvosome a probable DNA-RuvA(4)-RuvB(12)-RuvC(2) complex forms which resolves the HJ. Requires Mg(2+) as cofactor.

It localises to the cytoplasm. It catalyses the reaction Endonucleolytic cleavage at a junction such as a reciprocal single-stranded crossover between two homologous DNA duplexes (Holliday junction).. In terms of biological role, the RuvA-RuvB-RuvC complex processes Holliday junction (HJ) DNA during genetic recombination and DNA repair. Endonuclease that resolves HJ intermediates. Cleaves cruciform DNA by making single-stranded nicks across the HJ at symmetrical positions within the homologous arms, yielding a 5'-phosphate and a 3'-hydroxyl group; requires a central core of homology in the junction. The consensus cleavage sequence is 5'-(A/T)TT(C/G)-3'. Cleavage occurs on the 3'-side of the TT dinucleotide at the point of strand exchange. HJ branch migration catalyzed by RuvA-RuvB allows RuvC to scan DNA until it finds its consensus sequence, where it cleaves and resolves the cruciform DNA. In Aromatoleum aromaticum (strain DSM 19018 / LMG 30748 / EbN1) (Azoarcus sp. (strain EbN1)), this protein is Crossover junction endodeoxyribonuclease RuvC.